Consider the following 139-residue polypeptide: Nucleoside diphosphate kinase (139 aa).

ATP contacts are provided by K9, F57, R85, T91, R102, and N112. The active-site Pros-phosphohistidine intermediate is the H115.

This sequence belongs to the NDK family. Homotetramer. It depends on Mg(2+) as a cofactor.

Its subcellular location is the cytoplasm. It catalyses the reaction a 2'-deoxyribonucleoside 5'-diphosphate + ATP = a 2'-deoxyribonucleoside 5'-triphosphate + ADP. The catalysed reaction is a ribonucleoside 5'-diphosphate + ATP = a ribonucleoside 5'-triphosphate + ADP. In terms of biological role, major role in the synthesis of nucleoside triphosphates other than ATP. The ATP gamma phosphate is transferred to the NDP beta phosphate via a ping-pong mechanism, using a phosphorylated active-site intermediate. This chain is Nucleoside diphosphate kinase, found in Exiguobacterium sp. (strain ATCC BAA-1283 / AT1b).